A 125-amino-acid polypeptide reads, in one-letter code: uncharacterized protein (125 aa).

This is an uncharacterized protein from Caenorhabditis elegans.